Consider the following 253-residue polypeptide: 5'/3'-nucleotidase SurE (253 aa).

A divalent metal cation is bound by residues Asp-8, Asp-9, Ser-39, and Asn-92.

This sequence belongs to the SurE nucleotidase family. A divalent metal cation serves as cofactor.

It is found in the cytoplasm. It catalyses the reaction a ribonucleoside 5'-phosphate + H2O = a ribonucleoside + phosphate. The enzyme catalyses a ribonucleoside 3'-phosphate + H2O = a ribonucleoside + phosphate. It carries out the reaction [phosphate](n) + H2O = [phosphate](n-1) + phosphate + H(+). Nucleotidase with a broad substrate specificity as it can dephosphorylate various ribo- and deoxyribonucleoside 5'-monophosphates and ribonucleoside 3'-monophosphates with highest affinity to 3'-AMP. Also hydrolyzes polyphosphate (exopolyphosphatase activity) with the preference for short-chain-length substrates (P20-25). Might be involved in the regulation of dNTP and NTP pools, and in the turnover of 3'-mononucleotides produced by numerous intracellular RNases (T1, T2, and F) during the degradation of various RNAs. This is 5'/3'-nucleotidase SurE from Klebsiella pneumoniae (strain 342).